We begin with the raw amino-acid sequence, 327 residues long: Ubiquinone biosynthesis O-methyltransferase, mitochondrial (327 aa).

The S-adenosyl-L-methionine site is built by arginine 79, glycine 142, aspartate 165, and phenylalanine 210. Residues glutamate 211, glutamate 214, and histidine 215 each contribute to the Mg(2+) site.

It belongs to the class I-like SAM-binding methyltransferase superfamily. UbiG/COQ3 family. As to quaternary structure, component of a multi-subunit COQ enzyme complex, composed of at least COQ3, COQ4, COQ5, COQ6, COQ7 and COQ9. The cofactor is Mg(2+).

The protein resides in the mitochondrion inner membrane. It catalyses the reaction a 3,4-dihydroxy-5-(all-trans-polyprenyl)benzoate + S-adenosyl-L-methionine = a 4-hydroxy-3-methoxy-5-(all-trans-polyprenyl)benzoate + S-adenosyl-L-homocysteine + H(+). The enzyme catalyses a 3-demethylubiquinone + S-adenosyl-L-methionine = a ubiquinone + S-adenosyl-L-homocysteine. The catalysed reaction is a 3-demethylubiquinol + S-adenosyl-L-methionine = a ubiquinol + S-adenosyl-L-homocysteine + H(+). It functions in the pathway cofactor biosynthesis; ubiquinone biosynthesis. In terms of biological role, O-methyltransferase required for two non-consecutive steps during ubiquinone biosynthesis. Catalyzes the 2 O-methylation of 3,4-dihydroxy-5-(all-trans-polyprenyl)benzoic acid into 4-hydroxy-3-methoxy-5-(all-trans-polyprenyl)benzoic acid. Also catalyzes the last step of ubiquinone biosynthesis by mediating methylation of 3-demethylubiquinone into ubiquinone. Also able to mediate the methylation of 3-demethylubiquinol into ubiquinol. In Candida albicans (Yeast), this protein is Ubiquinone biosynthesis O-methyltransferase, mitochondrial.